Reading from the N-terminus, the 692-residue chain is A-kinase anchor protein 8 (692 aa).

Positions 1-195 are interaction with MCM2; that stretch reads MDQGYGGYGA…FMRGRGQGRF (195 aa). The interaction with DPY30 stretch occupies residues 1-210; sequence MDQGYGGYGA…PGTFMRSDPF (210 aa). Arg109 bears the Asymmetric dimethylarginine; alternate mark. Omega-N-methylarginine; alternate is present on Arg109. The segment at 109–201 is interaction with DDX5; sequence RGGSGGGGEG…QGRFQDRSNP (93 aa). Ser112 bears the Phosphoserine mark. Disordered regions lie at residues 168–203, 231–254, and 269–382; these read GQYS…NPGT, GGRG…SMAP, and STMP…RTRD. Basic and acidic residues predominate over residues 172–182; that stretch reads ECRDPARERGS. At Ser199 the chain carries Phosphoserine. Arg233 and Arg277 each carry omega-N-methylarginine. Basic and acidic residues-rich tracts occupy residues 281–297 and 314–323; these read RMRD…DRFG and PDTKLARVDS. A Bipartite nuclear localization signal motif is present at residues 289-306; that stretch reads KRRGFDRFGPDGTGRKRK. A Glycyl lysine isopeptide (Lys-Gly) (interchain with G-Cter in SUMO2) cross-link involves residue Lys317. 3 positions are modified to phosphoserine: Ser323, Ser328, and Ser339. The segment covering 324-334 has biased composition (acidic residues); that stretch reads EGDFSENDDAA. Residues 387–450 form an involved in chromatin-binding region; sequence RIQFACSVCK…NKKIEKRRQE (64 aa). C2H2 AKAP95-type zinc fingers lie at residues 392 to 414 and 481 to 504; these read CSVC…SKFH and CLAC…SVDH. An involved in condensin complex recruitment region spans residues 525–569; that stretch reads SVLNNRHIVKMLEKYLKGEDPFTSETVDPEMEGDDNLGGEDKKET. Positions 545 to 571 are disordered; that stretch reads PFTSETVDPEMEGDDNLGGEDKKETPE. Positions 551 to 562 are enriched in acidic residues; it reads VDPEMEGDDNLG. Residue Lys567 forms a Glycyl lysine isopeptide (Lys-Gly) (interchain with G-Cter in SUMO2) linkage. Positions 572–589 are RII-binding; the sequence is EVAADVLAEVITAAVRAV. The required for interaction with MYCBP stretch occupies residues 576 to 593; the sequence is DVLAEVITAAVRAVDGEG. The interval 592 to 692 is disordered; sequence EGAPAPESSG…AESKDAVPTE (101 aa). Basic and acidic residues predominate over residues 634-646; the sequence is AHEKGVPKARSEA. The residue at position 662 (Ser662) is a Phosphoserine. Residues 663–675 are compositionally biased toward low complexity; the sequence is AQTRVAPAPAAAD. Basic and acidic residues predominate over residues 683–692; that stretch reads AESKDAVPTE. Ser685 bears the Phosphoserine mark.

This sequence belongs to the AKAP95 family. As to quaternary structure, binds to the PKA RII-alpha regulatory subunit PRKAR2A (phosphorylated at 'Thr-54') during mitosis. Interacts (via C-terminus) with FIGN. Interacts with NCAPD2, CCND1, MCM2, RPS6KA1, PDE4A. Interacts with CCND3, CCNE1, DDX5, CASP3. Interacts with NFKB1; detetcted in the cytoplasm. Interacts with MYCBP; MYCBP is translocated to the nucleus and the interaction prevents the association of the PKA catalytic subunit leading to suppression of PKA activity. Interacts with DPY30; mediating AKAP8 association with at least the MLL4/WBP7 HMT complex. Interacts with HDAC3; increased during mitosis. Interacts with GJA1; in the nucleus and in the nuclear membrane; the nuclear association increases with progress of cell cycle G1, S and G2 phase and decreases in M phase. Post-translationally, phosphorylated on tyrosine residues probably by SRC subfamily protein kinases; multiple phosphorylation is leading to dissociation from nuclear structures implicated in chromatin structural changes. As to expression, highly expressed in heart, liver, skeletal muscle, kidney and pancreas. Expressed in mature dendritic cells.

It is found in the nucleus. Its subcellular location is the nucleus matrix. The protein resides in the nucleolus. It localises to the cytoplasm. Functionally, anchoring protein that mediates the subcellular compartmentation of cAMP-dependent protein kinase (PKA type II). Acts as an anchor for a PKA-signaling complex onto mitotic chromosomes, which is required for maintenance of chromosomes in a condensed form throughout mitosis. Recruits condensin complex subunit NCAPD2 to chromosomes required for chromatin condensation; the function appears to be independent from PKA-anchoring. May help to deliver cyclin D/E to CDK4 to facilitate cell cycle progression. Required for cell cycle G2/M transition and histone deacetylation during mitosis. In mitotic cells recruits HDAC3 to the vicinity of chromatin leading to deacetylation and subsequent phosphorylation at 'Ser-10' of histone H3; in this function may act redundantly with AKAP8L. Involved in nuclear retention of RPS6KA1 upon ERK activation thus inducing cell proliferation. May be involved in regulation of DNA replication by acting as scaffold for MCM2. Enhances HMT activity of the KMT2 family MLL4/WBP7 complex and is involved in transcriptional regulation. In a teratocarcinoma cell line is involved in retinoic acid-mediated induction of developmental genes implicating H3 'Lys-4' methylation. May be involved in recruitment of active CASP3 to the nucleus in apoptotic cells. May act as a carrier protein of GJA1 for its transport to the nucleus. May play a repressive role in the regulation of rDNA transcription. Preferentially binds GC-rich DNA in vitro. In cells, associates with ribosomal RNA (rRNA) chromatin, preferentially with rRNA promoter and transcribed regions. Involved in modulation of Toll-like receptor signaling. Required for the cAMP-dependent suppression of TNF-alpha in early stages of LPS-induced macrophage activation; the function probably implicates targeting of PKA to NFKB1. The polypeptide is A-kinase anchor protein 8 (AKAP8) (Homo sapiens (Human)).